The following is a 392-amino-acid chain: Succinate--CoA ligase [ADP-forming] subunit beta (392 aa).

Residues 9 to 236 form the ATP-grasp domain; the sequence is RDLFERHGLP…QAAVDPLEQA (228 aa). Residues lysine 45, 52-54, alanine 94, and glutamate 99 each bind ATP; that span reads GRG. Residues asparagine 191 and aspartate 205 each coordinate Mg(2+). Residues asparagine 256 and 318–320 contribute to the substrate site; that span reads GIT.

This sequence belongs to the succinate/malate CoA ligase beta subunit family. In terms of assembly, heterotetramer of two alpha and two beta subunits. Mg(2+) serves as cofactor.

It catalyses the reaction succinate + ATP + CoA = succinyl-CoA + ADP + phosphate. The catalysed reaction is GTP + succinate + CoA = succinyl-CoA + GDP + phosphate. The protein operates within carbohydrate metabolism; tricarboxylic acid cycle; succinate from succinyl-CoA (ligase route): step 1/1. In terms of biological role, succinyl-CoA synthetase functions in the citric acid cycle (TCA), coupling the hydrolysis of succinyl-CoA to the synthesis of either ATP or GTP and thus represents the only step of substrate-level phosphorylation in the TCA. The beta subunit provides nucleotide specificity of the enzyme and binds the substrate succinate, while the binding sites for coenzyme A and phosphate are found in the alpha subunit. This chain is Succinate--CoA ligase [ADP-forming] subunit beta, found in Salinispora tropica (strain ATCC BAA-916 / DSM 44818 / JCM 13857 / NBRC 105044 / CNB-440).